The sequence spans 148 residues: uncharacterized protein (148 aa).

This is an uncharacterized protein from Methanothermobacter thermautotrophicus (Methanobacterium thermoformicicum).